The sequence spans 1148 residues: MSRATSVGDQLEAPARIIYLNQSHLNKFCDNRISTAKYSVLTFLPRFLYEQIRRAANAFFLFIALLQQIPDVSPTGRYTTLVPLVIILTIAGIKEIIEDFKRHKADNAVNKKKTIVLRNGMWHTIMWKEVAVGDIVKVLNGQYLPADMVLFSSSEPQGMCYVETANLDGETNLKIRQGLSHTTDMQTRDVLMKLSGRIECEGPNRHLYDFTGNLHLDGKSSVALGPDQILLRGTQLRNTQWVFGVVVYTGHDSKLMQNSTKAPLKRSNVEKVTNVQILVLFGILLVMALVSSVGALFWNGSHGGKSWYIKKMDTNSDNFGYNLLTFIILYNNLIPISLLVTLEVVKYTQALFINWDMDMYYIENDTPAMARTSNLNEELGQVKYLFSDKTGTLTCNIMNFKKCSIAGVTYGHFPELAREQSSDDFCRMTSCTNDSCDFNDPRLLKNIEDQHPTAPCIQEFLTLLAVCHTVVPEKDGDEIIYQASSPDEAALVKGAKKLGFVFTGRTPYSVIIEAMGQEQTFGILNVLEFSSDRKRMSVIVRLPSGQLRLYCKGADNVIFERLSKDSKYMEETLCHLEYFATEGLRTLCVAYADLSENEYEEWLKVYQEASIILKDRAQRLEECYEIIEKNLLLLGATAIEDRLQAGVPETIATLLKAEIKIWVLTGDKQETAINIGYSCRLVSQNMALILLKEDSLDATRAAITQHCTDLGNLLGKENDVALIIDGHTLKYALSFEVRRSFLDLALSCKAVICCRVSPLQKSEIVDVVKKRVKAITLAIGDGANDVGMIQTAHVGVGISGNEGMQATNNSDYAIAQFSYLEKLLLVHGAWSYNRVTKCILYCFYKNVVLYIIELWFAFVNGFSGQILFERWCIGLYNVIFTALPPFTLGIFERSCTQESMLRFPQLYRITQNAEGFNTKVFWGHCINALVHSLILFWVPMKALEHDTPVTSGHATDYLFVGNIVYTYVVVTVCLKAGLETTAWTKFSHLAVWGSMLIWLVFFGVYSTIWPTIPIAPDMKGQATMVLSSAYFWLGLFLVPTACLIEDVAWRAAKHTCKKTLLEEVQELETKSRVMGKAMLRDSNGKRMNERDRLIKRLSRKTPPTLFRTGSIQQCVSHGYAFSQEEHGAVTQEEIVRAYDTTKENSRKK.

At 1–44 (MSRATSVGDQLEAPARIIYLNQSHLNKFCDNRISTAKYSVLTFL) the chain is on the cytoplasmic side. Thr5 carries the phosphothreonine modification. A helical membrane pass occupies residues 45–66 (PRFLYEQIRRAANAFFLFIALL). The Exoplasmic loop segment spans residues 67 to 71 (QQIPD). Residues 72-94 (VSPTGRYTTLVPLVIILTIAGIK) form a helical membrane-spanning segment. The Cytoplasmic portion of the chain corresponds to 95–276 (EIIEDFKRHK…SNVEKVTNVQ (182 aa)). The helical transmembrane segment at 277–298 (ILVLFGILLVMALVSSVGALFW) threads the bilayer. The Exoplasmic loop portion of the chain corresponds to 299 to 323 (NGSHGGKSWYIKKMDTNSDNFGYNL). A helical membrane pass occupies residues 324 to 345 (LTFIILYNNLIPISLLVTLEVV). Residues 346–837 (KYTQALFINW…GAWSYNRVTK (492 aa)) lie on the Cytoplasmic side of the membrane. The active-site 4-aspartylphosphate intermediate is the Asp388. Asp388, Lys389, Thr390, Glu488, Phe529, Lys552, Arg585, Thr665, Gly666, Asp667, Arg755, and Lys761 together coordinate ATP. Asp388 serves as a coordination point for Mg(2+). A Mg(2+)-binding site is contributed by Thr390. Asp781 contributes to the Mg(2+) binding site. ATP contacts are provided by Asn784 and Asp785. Residue Asp785 participates in Mg(2+) binding. A helical transmembrane segment spans residues 838–858 (CILYCFYKNVVLYIIELWFAF). At 859–870 (VNGFSGQILFER) the chain is on the exoplasmic loop side. The helical transmembrane segment at 871 to 890 (WCIGLYNVIFTALPPFTLGI) threads the bilayer. Over 891-920 (FERSCTQESMLRFPQLYRITQNAEGFNTKV) the chain is Cytoplasmic. A helical membrane pass occupies residues 921 to 942 (FWGHCINALVHSLILFWVPMKA). At 943 to 956 (LEHDTPVTSGHATD) the chain is on the exoplasmic loop side. A helical transmembrane segment spans residues 957-979 (YLFVGNIVYTYVVVTVCLKAGLE). The Cytoplasmic portion of the chain corresponds to 980–985 (TTAWTK). A helical membrane pass occupies residues 986 to 1006 (FSHLAVWGSMLIWLVFFGVYS). Over 1007-1024 (TIWPTIPIAPDMKGQATM) the chain is Exoplasmic loop. The chain crosses the membrane as a helical span at residues 1025–1049 (VLSSAYFWLGLFLVPTACLIEDVAW). Over 1050–1148 (RAAKHTCKKT…DTTKENSRKK (99 aa)) the chain is Cytoplasmic.

It belongs to the cation transport ATPase (P-type) (TC 3.A.3) family. Type IV subfamily. Component of a P4-ATPase flippase complex which consists of a catalytic alpha subunit and an accessory beta subunit. Interacts with TMEM30A to form a flippase complex. Mg(2+) is required as a cofactor. As to expression, found in testis, heart and brain. Most abundant in testis. Also detected in fetal tissues. Expressed in retinal photoreceptor cells; detected in retina outer nuclear layer and inner segment (at protein level).

The protein resides in the membrane. It is found in the golgi apparatus membrane. It localises to the endosome membrane. The protein localises to the cell membrane. Its subcellular location is the photoreceptor outer segment membrane. The protein resides in the photoreceptor inner segment membrane. It catalyses the reaction ATP + H2O + phospholipidSide 1 = ADP + phosphate + phospholipidSide 2.. The enzyme catalyses a 1,2-diacyl-sn-glycero-3-phospho-L-serine(out) + ATP + H2O = a 1,2-diacyl-sn-glycero-3-phospho-L-serine(in) + ADP + phosphate + H(+). It carries out the reaction a 1,2-diacyl-sn-glycero-3-phosphoethanolamine(in) + ATP + H2O = a 1,2-diacyl-sn-glycero-3-phosphoethanolamine(out) + ADP + phosphate + H(+). Catalytic component of a P4-ATPase flippase complex which catalyzes the hydrolysis of ATP coupled to the transport of aminophospholipids from the outer to the inner leaflet of various membranes and ensures the maintenance of asymmetric distribution of phospholipids. Able to translocate phosphatidylserine, but not phosphatidylcholine. Phospholipid translocation also seems to be implicated in vesicle formation and in uptake of lipid signaling molecules. Reconstituted to liposomes, the ATP8A2:TMEM30A flippase complex predominantly transports phosphatidylserine (PS) and to a lesser extent phosphatidylethanolamine (PE). Phospholipid translocation is not associated with a countertransport of an inorganic ion or other charged substrate from the cytoplasmic side toward the exoplasm in connection with the phosphorylation from ATP. ATP8A2:TMEM30A may be involved in regulation of neurite outgrowth. Proposed to function in the generation and maintenance of phospholipid asymmetry in photoreceptor disk membranes and neuronal axon membranes. May be involved in vesicle trafficking in neuronal cells. Required for normal visual and auditory function; involved in photoreceptor and inner ear spiral ganglion cell survival. In Mus musculus (Mouse), this protein is Phospholipid-transporting ATPase IB.